A 982-amino-acid polypeptide reads, in one-letter code: Protein cramped (982 aa).

Disordered stretches follow at residues 1 to 37, 71 to 111, 323 to 349, 407 to 456, and 822 to 851; these read MEELSKQPPPPPLTQPPPPSSSVSIEEPLPNGKGGGA, QKMK…GSGK, SLPSAASNNNNNNNETEPLQPSVASLD, NKRL…SSGD, and GTSSAGISTSGSKPDCSMNAMTASQDQEPG. Residues 7–20 are compositionally biased toward pro residues; the sequence is QPPPPPLTQPPPPS. Over residues 21-30 the composition is skewed to low complexity; it reads SSVSIEEPLP. The span at 86 to 98 shows a compositional bias: basic and acidic residues; sequence SEREPNKKEEKAA. Over residues 100-111 the composition is skewed to polar residues; the sequence is KTPSQLKTGSGK. The 65-residue stretch at 109-173 folds into the SANT domain; sequence SGKTTWTNVE…HYYQTHHKIC (65 aa). Positions 410–425 are enriched in basic and acidic residues; it reads LRTESGSEKRSPETKK. A phosphoserine mark is found at Ser431 and Ser437. The segment covering 822–833 has biased composition (low complexity); the sequence is GTSSAGISTSGS.

Belongs to the cramped family. Ubiquitously expressed throughout embryonic development. High expression is detected in CNS and gonads.

The protein resides in the nucleus. Functionally, polycomb group (Pc-G) genes are needed to maintain expression patterns of the homeotic selector genes of the Antennapedia (Antp-C) and Bithorax (Bx-C) complexes, and hence for the maintenance of segmental determination. Can act as a modifier of position effect variegation (PEV). This Drosophila melanogaster (Fruit fly) protein is Protein cramped (crm).